Here is a 145-residue protein sequence, read N- to C-terminus: Eukaryotic translation initiation factor 1A (145 aa).

Positions 1–15 (MPKNKGKGGKNRKRG) are enriched in basic residues. The tract at residues 1–25 (MPKNKGKGGKNRKRGKNEADDDKRE) is disordered. Residues 16–25 (KNEADDDKRE) are compositionally biased toward basic and acidic residues. Residues 22 to 96 (DKRELVFKED…DKADVILKLM (75 aa)) form the S1-like domain.

It belongs to the eIF-1A family.

Functionally, seems to be required for maximal rate of protein biosynthesis. Enhances ribosome dissociation into subunits and stabilizes the binding of the initiator Met-tRNA(I) to 40 S ribosomal subunits. The polypeptide is Eukaryotic translation initiation factor 1A (Onobrychis viciifolia (Common sainfoin)).